The primary structure comprises 448 residues: tRNA(Ile)-lysidine synthase (448 aa).

25–30 (SGGSDS) contacts ATP.

The protein belongs to the tRNA(Ile)-lysidine synthase family.

The protein localises to the cytoplasm. The enzyme catalyses cytidine(34) in tRNA(Ile2) + L-lysine + ATP = lysidine(34) in tRNA(Ile2) + AMP + diphosphate + H(+). In terms of biological role, ligates lysine onto the cytidine present at position 34 of the AUA codon-specific tRNA(Ile) that contains the anticodon CAU, in an ATP-dependent manner. Cytidine is converted to lysidine, thus changing the amino acid specificity of the tRNA from methionine to isoleucine. The chain is tRNA(Ile)-lysidine synthase from Brucella canis (strain ATCC 23365 / NCTC 10854 / RM-666).